The following is a 333-amino-acid chain: MDVVSLDKPFMYFEEIDNELDYEPESANEVAKKLPYQGQLKLLLGELFFLSKLQRHGILDGATVVYIGSAPGTHIRYLRDHFYNLGVIIKWMLIDGRHHDPILNGLRDVTLVTRFVDEEYLRSIKKQLHPSKIILISDVRSKRGGNEPSTADLLSNYALQNVMISILNPVASSLKWRCPFPDQWIKDFYIPHGNKMLQPFAPSYSAEMRLLSIYTGENMRLTRVTKSDAVNYEKKMYYLNKIVRNKVVINFDYPNQEYDYFHMYFMLRTVYCNKTFPTTKAKILFLQQSIFRFLNIPTTSTEKVSHEPIQRKISSKDSMSKNRNSKRSVRGNK.

Residue tyrosine 22 participates in mRNA binding. Glutamine 39, tyrosine 66, glycine 68, glycine 72, aspartate 95, arginine 97, valine 116, and aspartate 138 together coordinate S-adenosyl-L-methionine. Residues 169–249 are binding to NPH-I; that stretch reads PVASSLKWRC…NKIVRNKVVI (81 aa). Residue lysine 175 is the For methyltransferase activity of the active site. MRNA-binding positions include 177–180, aspartate 182, 205–207, and glutamate 233; these read RCPF and SAE. Residues 305 to 320 show a composition bias toward basic and acidic residues; that stretch reads SHEPIQRKISSKDSMS. The disordered stretch occupies residues 305 to 333; sequence SHEPIQRKISSKDSMSKNRNSKRSVRGNK. The span at 323 to 333 shows a compositional bias: basic residues; the sequence is RNSKRSVRGNK.

It belongs to the class I-like SAM-binding methyltransferase superfamily. Poxvirus/kinetoplastid 2'-O-MTase family. In terms of assembly, interacts with poly(A) polymerase catalytic subunit OPG063. Interacts with OPG109 and OPG123; these interactions might help linking transcription to capping and polyadenylation.

It is found in the virion. The catalysed reaction is a 5'-end (N(7)-methyl 5'-triphosphoguanosine)-ribonucleoside in mRNA + S-adenosyl-L-methionine = a 5'-end (N(7)-methyl 5'-triphosphoguanosine)-(2'-O-methyl-ribonucleoside) in mRNA + S-adenosyl-L-homocysteine + H(+). Functionally, displays methyltransferase, positive regulation of the poly(A) polymerase and transcription elongation activities. Involved in the modification of both mRNA ends and in intermediate and late gene positive transcription elongation. At the mRNAs 5' end, methylates the ribose 2' OH group of the first transcribed nucleotide, thereby producing a 2'-O-methylpurine cap. At the 3' end, functions as a processivity factor which stimulates the activity of the viral poly(A) polymerase OPG063 that creates mRNA's poly(A) tail. In the presence of OPG102, OPG063 does not dissociate from the RNA allowing tail elongation to around 250 adenylates. The protein is Cap-specific mRNA (nucleoside-2'-O-)-methyltransferase (OPG102) of Cynomys gunnisoni (Gunnison's prairie dog).